Consider the following 362-residue polypeptide: Spermidine/putrescine import ATP-binding protein PotA (362 aa).

One can recognise an ABC transporter domain in the interval 6-236 (VELKHVGKRY…PVNHFVADFI (231 aa)). 38 to 45 (GPSGSGKT) is a binding site for ATP.

The protein belongs to the ABC transporter superfamily. Spermidine/putrescine importer (TC 3.A.1.11.1) family. The complex is composed of two ATP-binding proteins (PotA), two transmembrane proteins (PotB and PotC) and a solute-binding protein (PotD).

The protein resides in the cell membrane. It carries out the reaction ATP + H2O + polyamine-[polyamine-binding protein]Side 1 = ADP + phosphate + polyamineSide 2 + [polyamine-binding protein]Side 1.. Part of the ABC transporter complex PotABCD involved in spermidine/putrescine import. Responsible for energy coupling to the transport system. The polypeptide is Spermidine/putrescine import ATP-binding protein PotA (Lacticaseibacillus paracasei (strain ATCC 334 / BCRC 17002 / CCUG 31169 / CIP 107868 / KCTC 3260 / NRRL B-441) (Lactobacillus paracasei)).